We begin with the raw amino-acid sequence, 354 residues long: Guanine nucleotide-binding protein G(i) subunit alpha-1 (354 aa).

G2 is lipidated: N-myristoyl glycine. C3 carries S-palmitoyl cysteine lipidation. The region spanning 32–354 (REVKLLLLGA…KNNLKDCGLF (323 aa)) is the G-alpha domain. Residues 35–48 (KLLLLGAGESGKST) form a G1 motif region. GTP contacts are provided by residues 43 to 48 (ESGKST), 150 to 151 (DS), and 175 to 178 (LRTR). Residue S47 coordinates Mg(2+). A G2 motif region spans residues 173 to 181 (DVLRTRVKT). T181 is a Mg(2+) binding site. The interval 196 to 205 (FKMFDVGGQR) is G3 motif. Residues 200 to 204 (DVGGQ), 269 to 272 (NKKD), and A326 contribute to the GTP site. The G4 motif stretch occupies residues 265–272 (ILFLNKKD). Positions 324–329 (TCATDT) are G5 motif.

This sequence belongs to the G-alpha family. G(i/o/t/z) subfamily. In terms of assembly, heterotrimeric G proteins are composed of 3 units; alpha, beta and gamma. The alpha chain contains the guanine nucleotide binding site. Part of a spindle orientation complex at least composed of GNAI1, GPSM2 and NUMA1. Identified in complex with the beta subunit GNB1 and the gamma subunit GNG1. Identified in complex with the beta subunit GNB1 and the gamma subunit GNG2. Component of the TAS2R14-GNAI1 complex, consisting of TAS2R14, GNAI1, GNB1 and GNG2; within the complex interacts with TAS2R14; this complex plays a role in the perception of bitterness. GTP binding causes dissociation of the heterotrimer, liberating the individual subunits so that they can interact with downstream effector proteins. Interacts (GDP-bound form) with GPSM1; this inhibits guanine nucleotide exchange and GTP binding. Interacts (GDP-bound form) with GPSM2 (via GoLoco domains); this inhibits guanine nucleotide exchange. Interacts with RGS10; this strongly enhances GTP hydrolysis. Interacts with RGS1 and RGS16. Interacts with RGS4. Interacts with RGS12. Interacts (via active GTP- or inactive GDP-bound forms) with RGS14 (via RGS and GoLoco domains). Interacts with RGS3, RGS6, RGS7, RGS8, RGS17, RGS18 and RGS20 (in vitro). Interacts (GDP-bound form) with RIC8A (via C-terminus); promoting GNAI1 folding and association with the plasma membrane. Interacts (inactive GDP-bound form) with NUCB1 (via GBA motif); the interaction leads to activation of GNAI1. Interacts (inactive GDP-bound form) with CCDC88C/DAPLE (via GBA motif); the interaction leads to activation of GNAI1. Interacts (inactive GDP-bound form) with CCDC8A/GIV (via GBA motif). Interacts with GPR15. Myristoylation at Gly-2 is required for membrane anchoring before palmitoylation. Post-translationally, palmitoylation at Cys-3 varies with membrane lipid composition.

Its subcellular location is the nucleus. The protein localises to the cytoplasm. It is found in the cell membrane. It localises to the cytoskeleton. The protein resides in the microtubule organizing center. Its subcellular location is the centrosome. The protein localises to the cell cortex. It is found in the membrane. It catalyses the reaction GTP + H2O = GDP + phosphate + H(+). In terms of biological role, guanine nucleotide-binding proteins (G proteins) function as transducers downstream of G protein-coupled receptors (GPCRs) in numerous signaling cascades. The alpha chain contains the guanine nucleotide binding site and alternates between an active, GTP-bound state and an inactive, GDP-bound state. Signaling by an activated GPCR promotes GDP release and GTP binding. The alpha subunit has a low GTPase activity that converts bound GTP to GDP, thereby terminating the signal. Both GDP release and GTP hydrolysis are modulated by numerous regulatory proteins. Signaling is mediated via effector proteins, such as adenylate cyclase. Inhibits adenylate cyclase activity of ADCY1, ADCY5 and ADCY6, leading to decreased intracellular cAMP levels. The inactive GDP-bound form prevents the association of RGS14 with centrosomes and is required for the translocation of RGS14 from the cytoplasm to the plasma membrane. Required for normal cytokinesis during mitosis. Required for cortical dynein-dynactin complex recruitment during metaphase. This Rattus norvegicus (Rat) protein is Guanine nucleotide-binding protein G(i) subunit alpha-1 (Gnai1).